Here is a 549-residue protein sequence, read N- to C-terminus: Copalyl diphosphate synthase (549 aa).

A DXDDTA motif motif is present at residues Asp321 to Ala326. The short motif at Gln451 to Trp457 is the QXXDGSW motif element.

This sequence belongs to the terpene synthase family. Mg(2+) serves as cofactor.

It catalyses the reaction (2E,6E,10E)-geranylgeranyl diphosphate = (+)-copalyl diphosphate. In terms of biological role, involved in the biosynthesis of the labdane-type bicyclic diterpene labda-8(17),12(E),14-triene. Catalyzes the conversion of geranylgeranyl diphosphate (GGDP) into (+)-copalyl diphosphate. The polypeptide is Copalyl diphosphate synthase (Streptomyces anulatus (Streptomyces chrysomallus)).